The primary structure comprises 147 residues: Large ribosomal subunit protein bL9 (147 aa).

It belongs to the bacterial ribosomal protein bL9 family.

Binds to the 23S rRNA. The protein is Large ribosomal subunit protein bL9 of Marinomonas sp. (strain MWYL1).